The chain runs to 500 residues: L-arabinose isomerase (500 aa).

The Mn(2+) site is built by E306, E333, H350, and H450.

This sequence belongs to the arabinose isomerase family. Homohexamer. Requires Mn(2+) as cofactor.

It carries out the reaction beta-L-arabinopyranose = L-ribulose. Its pathway is carbohydrate degradation; L-arabinose degradation via L-ribulose; D-xylulose 5-phosphate from L-arabinose (bacterial route): step 1/3. Functionally, catalyzes the conversion of L-arabinose to L-ribulose. The polypeptide is L-arabinose isomerase (Yersinia pseudotuberculosis serotype O:3 (strain YPIII)).